Here is a 145-residue protein sequence, read N- to C-terminus: MIALIQRVSEAKVVVDGATIGEIDKGLLVLLGVEREDNIEKMQKLATKVMSYRVFSDENGKMNLNLEQAGGSLLVVSQFTLAADTGRGLRPSFSGAGTPDQARELYEAFVDFCKSKGVNTQTGQFAADMKVSLVNDGPVTFNLQV.

Positions glycine 137–proline 138 match the Gly-cisPro motif, important for rejection of L-amino acids motif.

This sequence belongs to the DTD family. As to quaternary structure, homodimer.

It is found in the cytoplasm. It catalyses the reaction glycyl-tRNA(Ala) + H2O = tRNA(Ala) + glycine + H(+). It carries out the reaction a D-aminoacyl-tRNA + H2O = a tRNA + a D-alpha-amino acid + H(+). An aminoacyl-tRNA editing enzyme that deacylates mischarged D-aminoacyl-tRNAs. Also deacylates mischarged glycyl-tRNA(Ala), protecting cells against glycine mischarging by AlaRS. Acts via tRNA-based rather than protein-based catalysis; rejects L-amino acids rather than detecting D-amino acids in the active site. By recycling D-aminoacyl-tRNA to D-amino acids and free tRNA molecules, this enzyme counteracts the toxicity associated with the formation of D-aminoacyl-tRNA entities in vivo and helps enforce protein L-homochirality. The chain is D-aminoacyl-tRNA deacylase from Shewanella pealeana (strain ATCC 700345 / ANG-SQ1).